The primary structure comprises 429 residues: UDP-N-acetylglucosamine 1-carboxyvinyltransferase (429 aa).

22–23 (KN) contacts phosphoenolpyruvate. Arg102 is a binding site for UDP-N-acetyl-alpha-D-glucosamine. Cys126 (proton donor) is an active-site residue. Cys126 is modified (2-(S-cysteinyl)pyruvic acid O-phosphothioketal). Residues 171–174 (KVSV), Asp316, and Ile338 contribute to the UDP-N-acetyl-alpha-D-glucosamine site.

This sequence belongs to the EPSP synthase family. MurA subfamily.

Its subcellular location is the cytoplasm. It catalyses the reaction phosphoenolpyruvate + UDP-N-acetyl-alpha-D-glucosamine = UDP-N-acetyl-3-O-(1-carboxyvinyl)-alpha-D-glucosamine + phosphate. It participates in cell wall biogenesis; peptidoglycan biosynthesis. Its function is as follows. Cell wall formation. Adds enolpyruvyl to UDP-N-acetylglucosamine. This Xanthobacter autotrophicus (strain ATCC BAA-1158 / Py2) protein is UDP-N-acetylglucosamine 1-carboxyvinyltransferase.